The primary structure comprises 77 residues: Sec-independent protein translocase protein TatA (77 aa).

Residues 1 to 21 form a helical membrane-spanning segment; that stretch reads MGSFSIWHWLVVLAIVVLVFG. Residues 40–77 are disordered; sequence KEGMKGAEEENTQPPPSHQQVTGHSIKSEIEEKDQTKV. Over residues 65–77 the composition is skewed to basic and acidic residues; it reads IKSEIEEKDQTKV.

It belongs to the TatA/E family. The Tat system comprises two distinct complexes: a TatABC complex, containing multiple copies of TatA, TatB and TatC subunits, and a separate TatA complex, containing only TatA subunits. Substrates initially bind to the TatABC complex, which probably triggers association of the separate TatA complex to form the active translocon.

Its subcellular location is the cell inner membrane. Functionally, part of the twin-arginine translocation (Tat) system that transports large folded proteins containing a characteristic twin-arginine motif in their signal peptide across membranes. TatA could form the protein-conducting channel of the Tat system. In Nitrosomonas eutropha (strain DSM 101675 / C91 / Nm57), this protein is Sec-independent protein translocase protein TatA.